Here is a 115-residue protein sequence, read N- to C-terminus: Large ribosomal subunit protein uL24 (115 aa).

This sequence belongs to the universal ribosomal protein uL24 family. In terms of assembly, part of the 50S ribosomal subunit.

Its function is as follows. One of two assembly initiator proteins, it binds directly to the 5'-end of the 23S rRNA, where it nucleates assembly of the 50S subunit. Functionally, one of the proteins that surrounds the polypeptide exit tunnel on the outside of the subunit. This chain is Large ribosomal subunit protein uL24, found in Deinococcus geothermalis (strain DSM 11300 / CIP 105573 / AG-3a).